We begin with the raw amino-acid sequence, 315 residues long: tRNA dimethylallyltransferase (315 aa).

Residue 13-20 (GPTASGKT) participates in ATP binding. 15 to 20 (TASGKT) serves as a coordination point for substrate. Interaction with substrate tRNA regions lie at residues 38–41 (DSAL), 162–166 (QRLSR), 243–248 (RCVGYR), and 276–283 (KRQITWLR).

This sequence belongs to the IPP transferase family. In terms of assembly, monomer. It depends on Mg(2+) as a cofactor.

The enzyme catalyses adenosine(37) in tRNA + dimethylallyl diphosphate = N(6)-dimethylallyladenosine(37) in tRNA + diphosphate. Functionally, catalyzes the transfer of a dimethylallyl group onto the adenine at position 37 in tRNAs that read codons beginning with uridine, leading to the formation of N6-(dimethylallyl)adenosine (i(6)A). This Vibrio vulnificus (strain CMCP6) protein is tRNA dimethylallyltransferase.